Here is a 417-residue protein sequence, read N- to C-terminus: Carboxypeptidase B (417 aa).

Positions 1–15 are cleaved as a signal peptide; the sequence is MLALLVLVTVALASA. The propeptide at 16–110 is activation peptide; the sequence is HHGGEHFEGE…VEAQFDSRVR (95 aa). The Peptidase M14 domain occupies 118-412; the sequence is KYNKWETIEA…LAIKYVASYV (295 aa). A disulfide bridge connects residues C173 and C186. 2 residues coordinate Zn(2+): H176 and E179. Substrate-binding positions include 176–179, R234, and 251–252; these read HARE and NR. Cystine bridges form between C245-C268 and C259-C273. Zn(2+) is bound at residue H304. Residues 305 to 306 and Y356 each bind substrate; that span reads SY. The active-site Proton donor/acceptor is E378.

It belongs to the peptidase M14 family. The cofactor is Zn(2+). In terms of tissue distribution, pancreas.

The protein resides in the secreted. The protein localises to the zymogen granule lumen. The enzyme catalyses Preferential release of a C-terminal lysine or arginine amino acid.. This Homo sapiens (Human) protein is Carboxypeptidase B (CPB1).